The sequence spans 137 residues: QSTVHIVGDNTGWSVPSSPNFYSQWAAGKTFRVGDSLQFNFPANAHNVHEMETKQSFDACNFVNSDNDVERTSPVIERLDELGMHYFVCTVGTHCSNGQKLSINVVAANATVSMPPPSSSPPSSVMPPPVMPPPSPS.

Q1 carries the pyrrolidone carboxylic acid modification. Residues 3 to 107 (TVHIVGDNTG…GQKLSINVVA (105 aa)) enclose the Phytocyanin domain. H46, C89, H94, and Q99 together coordinate Cu cation. A disulfide bridge links C60 with C95. N109 carries an N-linked (GlcNAc...) asparagine glycan. Residues 112–137 (VSMPPPSSSPPSSVMPPPVMPPPSPS) form a disordered region. Positions 114 to 137 (MPPPSSSPPSSVMPPPVMPPPSPS) are enriched in pro residues. P115 bears the 4-hydroxyproline; partial mark. 4 positions are modified to 4-hydroxyproline: P116, P117, P121, and P122. P127 carries the post-translational modification 4-hydroxyproline; partial. 5 positions are modified to 4-hydroxyproline: P128, P129, P133, P134, and P136.

The protein is Cucumber peeling cupredoxin of Cucumis sativus (Cucumber).